Reading from the N-terminus, the 420-residue chain is Glutamate dehydrogenase (420 aa).

Lysine 105 is an active-site residue. 220 to 226 lines the NAD(+) pocket; it reads GYGNAGY.

It belongs to the Glu/Leu/Phe/Val dehydrogenases family. Homohexamer.

It is found in the cytoplasm. The catalysed reaction is L-glutamate + NAD(+) + H2O = 2-oxoglutarate + NH4(+) + NADH + H(+). It catalyses the reaction L-glutamate + NADP(+) + H2O = 2-oxoglutarate + NH4(+) + NADPH + H(+). This is Glutamate dehydrogenase (gdhA) from Pyrococcus furiosus (strain ATCC 43587 / DSM 3638 / JCM 8422 / Vc1).